The following is a 93-amino-acid chain: Large ribosomal subunit protein uL23cz/uL23cy (93 aa).

This sequence belongs to the universal ribosomal protein uL23 family. In terms of assembly, part of the 50S ribosomal subunit.

It localises to the plastid. It is found in the chloroplast. Functionally, binds to 23S rRNA. The protein is Large ribosomal subunit protein uL23cz/uL23cy (rpl23-A) of Coffea arabica (Arabian coffee).